A 139-amino-acid polypeptide reads, in one-letter code: Large ribosomal subunit protein bL17 (139 aa).

This sequence belongs to the bacterial ribosomal protein bL17 family. As to quaternary structure, part of the 50S ribosomal subunit. Contacts protein L32.

This is Large ribosomal subunit protein bL17 from Cereibacter sphaeroides (strain ATCC 17025 / ATH 2.4.3) (Rhodobacter sphaeroides).